Consider the following 198-residue polypeptide: Recombination protein RecR (198 aa).

Residues 57–72 (CSTCQTLTDQDPCAIC) form a C4-type zinc finger. The Toprim domain occupies 80–175 (RMICVVEGVP…KVTRIAQGVP (96 aa)).

The protein belongs to the RecR family.

Functionally, may play a role in DNA repair. It seems to be involved in an RecBC-independent recombinational process of DNA repair. It may act with RecF and RecO. In Anaeromyxobacter dehalogenans (strain 2CP-C), this protein is Recombination protein RecR.